A 435-amino-acid chain; its full sequence is Serine--tRNA ligase (435 aa).

T242 to E244 contributes to the L-serine binding site. R273–E275 contacts ATP. Position 296 (E296) interacts with L-serine. Residue E360–S363 coordinates ATP. S396 provides a ligand contact to L-serine.

It belongs to the class-II aminoacyl-tRNA synthetase family. Type-1 seryl-tRNA synthetase subfamily. Homodimer. The tRNA molecule binds across the dimer.

Its subcellular location is the cytoplasm. The catalysed reaction is tRNA(Ser) + L-serine + ATP = L-seryl-tRNA(Ser) + AMP + diphosphate + H(+). It carries out the reaction tRNA(Sec) + L-serine + ATP = L-seryl-tRNA(Sec) + AMP + diphosphate + H(+). It functions in the pathway aminoacyl-tRNA biosynthesis; selenocysteinyl-tRNA(Sec) biosynthesis; L-seryl-tRNA(Sec) from L-serine and tRNA(Sec): step 1/1. In terms of biological role, catalyzes the attachment of serine to tRNA(Ser). Is also able to aminoacylate tRNA(Sec) with serine, to form the misacylated tRNA L-seryl-tRNA(Sec), which will be further converted into selenocysteinyl-tRNA(Sec). In Vibrio campbellii (strain ATCC BAA-1116), this protein is Serine--tRNA ligase.